A 201-amino-acid polypeptide reads, in one-letter code: ATP-dependent Clp protease proteolytic subunit (201 aa).

Residue S101 is the Nucleophile of the active site. Residue H126 is part of the active site.

Belongs to the peptidase S14 family. As to quaternary structure, component of the chloroplastic Clp protease core complex.

It localises to the plastid. The protein localises to the chloroplast stroma. It carries out the reaction Hydrolysis of proteins to small peptides in the presence of ATP and magnesium. alpha-casein is the usual test substrate. In the absence of ATP, only oligopeptides shorter than five residues are hydrolyzed (such as succinyl-Leu-Tyr-|-NHMec, and Leu-Tyr-Leu-|-Tyr-Trp, in which cleavage of the -Tyr-|-Leu- and -Tyr-|-Trp bonds also occurs).. Functionally, cleaves peptides in various proteins in a process that requires ATP hydrolysis. Has a chymotrypsin-like activity. Plays a major role in the degradation of misfolded proteins. The polypeptide is ATP-dependent Clp protease proteolytic subunit (Chlorella vulgaris (Green alga)).